A 214-amino-acid polypeptide reads, in one-letter code: Histone H1.1 (214 aa).

The disordered stretch occupies residues 1–43; it reads MSETAPVPQPASVAPEKPAATKKTRKPAKAAVPRKKPAGPSVS. Ser-2 is subject to N-acetylserine. Phosphoserine occurs at positions 2 and 12. Lys-17 is subject to N6-acetyllysine. Over residues 20–37 the composition is skewed to basic residues; that stretch reads ATKKTRKPAKAAVPRKKP. Lys-36 is subject to N6-(beta-hydroxybutyryl)lysine. The H15 domain maps to 38–111; it reads AGPSVSELIV…GAAGSFKLNK (74 aa). Ser-43 is modified (phosphoserine). Lys-54 is subject to N6-(beta-hydroxybutyryl)lysine. Arg-56 bears the Citrulline mark. Lys-66 carries the N6-(beta-hydroxybutyryl)lysine modification. The residue at position 67 (Ser-67) is a Phosphoserine. The residue at position 77 (Lys-77) is an N6-acetyllysine. Lys-87 is subject to N6-(beta-hydroxybutyryl)lysine. N6-(beta-hydroxybutyryl)lysine; alternate is present on Lys-92. Residue Lys-92 is modified to N6-acetyllysine; alternate. The interval 93–214 is disordered; the sequence is GTLVQTKGTG…KPKKAAPKKK (122 aa). Phosphoserine is present on Ser-106. Lys-108 carries the N6-(beta-hydroxybutyryl)lysine modification. Over residues 116–144 the composition is skewed to low complexity; the sequence is KASTTKVTVKAKASGAAKKPKKTAGAAAK. Lys-121 carries the N6-acetyllysine modification. 2 stretches are compositionally biased toward basic residues: residues 145-179 and 186-214; these read KTVKTPKKPKKPAVSKKTSSKSPKKPKVVKAKKVA and KAVKPKAAKVKVTKPKTPAKPKKAAPKKK. Thr-202 is subject to Phosphothreonine.

Belongs to the histone H1/H5 family. As to quaternary structure, interacts with DFFB. Post-translationally, H1 histones are progressively phosphorylated during the cell cycle, becoming maximally phosphorylated during late G2 phase and M phase, and being dephosphorylated sharply thereafter. In terms of processing, citrullination at Arg-56 (H1R54ci) by PADI4 takes place within the DNA-binding site of H1 and results in its displacement from chromatin and global chromatin decondensation, thereby promoting pluripotency and stem cell maintenance.

It is found in the nucleus. It localises to the chromosome. Its function is as follows. H1 histones bind to linker DNA between nucleosomes forming the macromolecular structure known as the chromatin fiber. H1 histones are necessary for the condensation of nucleosome chains into higher-order structured fibers. Also acts as a regulator of individual gene transcription through chromatin remodeling. In Rattus norvegicus (Rat), this protein is Histone H1.1.